Reading from the N-terminus, the 88-residue chain is Antitoxin VapB21 (88 aa).

Functionally, antitoxin component of a type II toxin-antitoxin (TA) system. The polypeptide is Antitoxin VapB21 (vapB21) (Mycobacterium tuberculosis (strain CDC 1551 / Oshkosh)).